The primary structure comprises 151 residues: Ribosome maturation factor RimP (151 aa).

This sequence belongs to the RimP family.

The protein localises to the cytoplasm. In terms of biological role, required for maturation of 30S ribosomal subunits. This chain is Ribosome maturation factor RimP, found in Nitrosococcus oceani (strain ATCC 19707 / BCRC 17464 / JCM 30415 / NCIMB 11848 / C-107).